The chain runs to 301 residues: tRNA dimethylallyltransferase 1 (301 aa).

10–17 (GPTASGKT) is a binding site for ATP. Residue 12-17 (TASGKT) coordinates substrate. Positions 35 to 38 (DSRQ) are interaction with substrate tRNA.

The protein belongs to the IPP transferase family. As to quaternary structure, monomer. Mg(2+) serves as cofactor.

It catalyses the reaction adenosine(37) in tRNA + dimethylallyl diphosphate = N(6)-dimethylallyladenosine(37) in tRNA + diphosphate. Functionally, catalyzes the transfer of a dimethylallyl group onto the adenine at position 37 in tRNAs that read codons beginning with uridine, leading to the formation of N6-(dimethylallyl)adenosine (i(6)A). The chain is tRNA dimethylallyltransferase 1 from Geotalea uraniireducens (strain Rf4) (Geobacter uraniireducens).